Reading from the N-terminus, the 293-residue chain is uncharacterized protein (293 aa).

Disordered stretches follow at residues 20–148 (ELHS…NNNT) and 226–283 (RENQ…GNKN). 3 stretches are compositionally biased toward acidic residues: residues 37 to 47 (LEDDEEYDDDQ), 56 to 91 (EEFDYDNDYNDEEFYDEDDDFKEDDDEEEEEEDDEM), and 99 to 112 (NIDDDDYEEDEEEQ). 2 stretches are compositionally biased toward low complexity: residues 117 to 148 (TNNNNNTTTTTPYTTYNNNNNNDINNNNNNNT) and 232 to 283 (NSNS…GNKN).

This is an uncharacterized protein from Dictyostelium discoideum (Social amoeba).